The sequence spans 751 residues: Serine/threonine-protein kinase B-raf (751 aa).

Residues 1–32 are compositionally biased toward gly residues; it reads MAALSGGGGSSSGGGGGGGGGGGGGDGGGGAE. A disordered region spans residues 1 to 55; sequence MAALSGGGGSSSGGGGGGGGGGGGGDGGGGAEQGQALFNGDMEPEAGAGAAASSA. Position 2 is an N-acetylalanine (Ala2). Residues 46–55 are compositionally biased toward low complexity; that stretch reads AGAGAAASSA. Ser135 carries the post-translational modification Phosphoserine. The RBD domain maps to 139–211; sequence PIVRVFLPNK…TGEELHVEVL (73 aa). Zn(2+) is bound by residues His219, Cys232, Cys235, Cys245, Cys248, His253, Cys256, and Cys264. The disordered stretch occupies residues 288 to 440; that stretch reads EASFPETALP…SSDDWEIPDG (153 aa). The segment covering 297-324 has biased composition (low complexity); that stretch reads PSGSSSAPPSDSTGPQILTSPSPSKSIP. Ser316 is modified (phosphoserine). The span at 331 to 346 shows a compositional bias: basic and acidic residues; that stretch reads PADEDHRNQFGQRDRS. Phosphoserine is present on Ser348. Thr356 is modified (phosphothreonine; by autocatalysis). The residue at position 379 (Thr379) is a Phosphothreonine. Ser382 carries the post-translational modification Phosphoserine. At Thr384 the chain carries Phosphothreonine. Residues 406–432 are compositionally biased toward basic and acidic residues; that stretch reads QRERKSSSSSSSEDRSRMKTLGRRDSS. Phosphoserine is present on residues Ser431 and Ser432. One can recognise a Protein kinase domain in the interval 442–702; sequence ITVGQRIGSG…PQILASIELL (261 aa). Residues 448–456 and Lys468 contribute to the ATP site; that span reads IGSGSFGTV. Asp561 acts as the Proton acceptor in catalysis. Residue Lys563 forms a Glycyl lysine isopeptide (Lys-Gly) (interchain with G-Cter in ubiquitin) linkage. Residue Arg656 is modified to Omega-N-methylarginine; by PRMT5. Residues Ser714 and Ser735 each carry the phosphoserine modification. Position 738 is a phosphothreonine; by MAPK1 (Thr738).

This sequence belongs to the protein kinase superfamily. TKL Ser/Thr protein kinase family. RAF subfamily. As to quaternary structure, monomer. Homodimer. Heterodimerizes with RAF1, and the heterodimer possesses a highly increased kinase activity compared to the respective homodimers or monomers. Heterodimerization is mitogen-regulated and enhanced by 14-3-3 proteins. MAPK1/ERK2 activation can induce a negative feedback that promotes the dissociation of the heterodimer by phosphorylating BRAF at Thr-738. Heterodimerizes (via N-terminus) with KSR1 (via N-terminus) or KSR2 (via N-terminus) in a MAP2K1-dependent manner. Interacts with MAP2K1 and MAP2K2. Found in a complex with at least BRAF, HRAS, MAP2K1, MAPK3 and RGS14. Interacts with RIT1. Interacts (via N-terminus) with RGS14 (via RBD domains); the interaction mediates the formation of a ternary complex with RAF1, a ternary complex inhibited by GNAI1. Interacts with DGKH. Interacts with PRMT5. Interacts with AKAP13, MAP2K1 and KSR1. Identified in a complex with AKAP13, KSR1 and MAP2K1. Interacts with FNIP1 and FNIP2. Zn(2+) is required as a cofactor. Phosphorylation at Ser-348 by SGK1 inhibits its activity. Dephosphorylation of Ser-348 by the SHOC2-MRAS-PP1c (SMP) complex consisting of SHOC2, GTP-bound M-Ras/MRAS and the catalytic subunit of protein phosphatase 1 (PPP1CA, PPP1CB or PPP1CC); this relieves inactivation and stimulates kinase activity. In terms of processing, methylation by PRMT5 decreases stability and kinase activity. Post-translationally, ubiquitinated by RNF149; which leads to proteasomal degradation. Polyubiquitinated at Lys-615 in response to EGF.

Its subcellular location is the nucleus. The protein resides in the cytoplasm. It localises to the cell membrane. It catalyses the reaction L-seryl-[protein] + ATP = O-phospho-L-seryl-[protein] + ADP + H(+). It carries out the reaction L-threonyl-[protein] + ATP = O-phospho-L-threonyl-[protein] + ADP + H(+). In quiescent cells, maintained in an inactive state via an intramolecular interaction between the protein kinase and N-terminal domains. Following mitogen-mediated cell activation, binds via its RGB domain to active HRAS (GTP-bound) which releases the inhibitory intramolecular interaction between the two domains. This allows the MAP2K1-mediated dimerization of KSR1 or KSR2, and BRAF which activates BRAF. In terms of biological role, involved in the transduction of mitogenic signals from the cell membrane to the nucleus. Phosphorylates MAP2K1, and thereby activates the MAP kinase signal transduction pathway. Phosphorylates PFKFB2. May play a role in the postsynaptic responses of hippocampal neurons. The polypeptide is Serine/threonine-protein kinase B-raf (Mus musculus (Mouse)).